The primary structure comprises 451 residues: Cysteine protease ATG4 (451 aa).

Cys122 acts as the Nucleophile in catalysis. Active-site residues include Asp297 and His299.

Belongs to the peptidase C54 family. As to quaternary structure, interacts with ATG8.

It localises to the cytoplasm. Its subcellular location is the nucleus. The protein resides in the preautophagosomal structure. It carries out the reaction [protein]-C-terminal L-amino acid-glycyl-phosphatidylethanolamide + H2O = [protein]-C-terminal L-amino acid-glycine + a 1,2-diacyl-sn-glycero-3-phosphoethanolamine. Its function is as follows. Cysteine protease that plays a key role in cytoplasm to vacuole transport (Cvt) and autophagy by mediating both proteolytic activation and delipidation of ATG8. Required for selective autophagic degradation of the nucleus (nucleophagy) as well as for mitophagy which contributes to regulate mitochondrial quantity and quality by eliminating the mitochondria to a basal level to fulfill cellular energy requirements and preventing excess ROS production. The protease activity is required for proteolytic activation of ATG8: cleaves the C-terminal amino acid of ATG8 to reveal a C-terminal glycine. ATG8 ubiquitin-like activity requires the exposure of the glycine at the C-terminus for its conjugation to phosphatidylethanolamine (PE) and its insertion to membranes, which is necessary for autophagy. The ATG8-PE conjugate mediates tethering between adjacent membranes and stimulates membrane hemifusion, leading to expansion of the autophagosomal membrane during autophagy. In addition to the protease activity, also catalyzes deconjugation of PE-conjugated forms of ATG8 during macroautophagy: ATG8 delipidation is required to release the protein from membranes, which facilitates multiple events during macroautophagy, and especially for efficient autophagosome biogenesis, the assembly of ATG9-containing tubulovesicular clusters into phagophores/autophagosomes, and for the disassembly of PAS-associated ATG components. ATG8 delipidation by ATG4 also recycles ATG8-PE generated on inappropriate membranes to maintain a reservoir of unlipidated ATG8 that is required for autophagosome formation at the PAS. This chain is Cysteine protease ATG4, found in Kluyveromyces marxianus (strain DMKU3-1042 / BCC 29191 / NBRC 104275) (Yeast).